A 368-amino-acid polypeptide reads, in one-letter code: Peptide chain release factor 2 (368 aa).

Position 251 is an N5-methylglutamine (Gln251).

The protein belongs to the prokaryotic/mitochondrial release factor family. Post-translationally, methylated by PrmC. Methylation increases the termination efficiency of RF2.

The protein localises to the cytoplasm. In terms of biological role, peptide chain release factor 2 directs the termination of translation in response to the peptide chain termination codons UGA and UAA. This chain is Peptide chain release factor 2, found in Streptomyces avermitilis (strain ATCC 31267 / DSM 46492 / JCM 5070 / NBRC 14893 / NCIMB 12804 / NRRL 8165 / MA-4680).